We begin with the raw amino-acid sequence, 261 residues long: Probable membrane transporter protein XF_0764 (261 aa).

Transmembrane regions (helical) follow at residues 6-26 (LIVTIGSGGLVGFALGLLGGG), 29-49 (ILATPLLLYVVGVTNPHIAIG), 78-98 (VIFALVGTLGAFLGSSIGMLI), 99-119 (DGQRLLLLFGLLMAMVGLLML), 150-170 (AASGFFGIGGGFLIVPALIFA), 175-195 (TINAIGSSLLAVGTFGLITTL), 205-225 (WTIAMEFIVGGITGGGLGTLL), and 239-259 (VFGLIVIAVAIYVIWRSWASL).

This sequence belongs to the 4-toluene sulfonate uptake permease (TSUP) (TC 2.A.102) family.

The protein localises to the cell membrane. The protein is Probable membrane transporter protein XF_0764 of Xylella fastidiosa (strain 9a5c).